The sequence spans 418 residues: Serine hydroxymethyltransferase (418 aa).

Residues Leu121 and 125–127 (GHL) each bind (6S)-5,6,7,8-tetrahydrofolate. Lys230 is subject to N6-(pyridoxal phosphate)lysine. 356-358 (SPF) serves as a coordination point for (6S)-5,6,7,8-tetrahydrofolate.

It belongs to the SHMT family. As to quaternary structure, homodimer. Requires pyridoxal 5'-phosphate as cofactor.

The protein resides in the cytoplasm. It carries out the reaction (6R)-5,10-methylene-5,6,7,8-tetrahydrofolate + glycine + H2O = (6S)-5,6,7,8-tetrahydrofolate + L-serine. The protein operates within one-carbon metabolism; tetrahydrofolate interconversion. It functions in the pathway amino-acid biosynthesis; glycine biosynthesis; glycine from L-serine: step 1/1. In terms of biological role, catalyzes the reversible interconversion of serine and glycine with tetrahydrofolate (THF) serving as the one-carbon carrier. This reaction serves as the major source of one-carbon groups required for the biosynthesis of purines, thymidylate, methionine, and other important biomolecules. Also exhibits THF-independent aldolase activity toward beta-hydroxyamino acids, producing glycine and aldehydes, via a retro-aldol mechanism. The protein is Serine hydroxymethyltransferase of Alteromonas mediterranea (strain DSM 17117 / CIP 110805 / LMG 28347 / Deep ecotype).